Reading from the N-terminus, the 167-residue chain is Large ribosomal subunit protein uL23 (167 aa).

The tract at residues 1-130 (MNVNEIIKGP…ELEAKNKEIA (130 aa)) is large ribosomal subunit protein uL23. 2 disordered regions span residues 91–112 (FEDESPQDQKDSETISENTDEK) and 137–167 (QAELAKKESETNENQEKKIENQTENQENSAK). Composition is skewed to basic and acidic residues over residues 97-112 (QDQKDSETISENTDEK) and 137-157 (QAELAKKESETNENQEKKIEN). The interval 131–167 (EKLAKKQAELAKKESETNENQEKKIENQTENQENSAK) is unknown. The span at 158–167 (QTENQENSAK) shows a compositional bias: polar residues.

It belongs to the universal ribosomal protein uL23 family. As to quaternary structure, part of the 50S ribosomal subunit. Contacts protein L29, and trigger factor when it is bound to the ribosome.

Functionally, one of the early assembly proteins it binds 23S rRNA. One of the proteins that surrounds the polypeptide exit tunnel on the outside of the ribosome. Forms the main docking site for trigger factor binding to the ribosome. The protein is Large ribosomal subunit protein uL23 of Mesomycoplasma hyopneumoniae (strain 7448) (Mycoplasma hyopneumoniae).